Reading from the N-terminus, the 208-residue chain is Small ribosomal subunit protein uS4 (208 aa).

Residues 32–53 (LNRKRGKNSPGQHGASKVKMSD) form a disordered region. Residues 99 to 161 (LRLDNVVYRL…YKSNVIIKKL (63 aa)) enclose the S4 RNA-binding domain.

Belongs to the universal ribosomal protein uS4 family. In terms of assembly, part of the 30S ribosomal subunit. Contacts protein S5. The interaction surface between S4 and S5 is involved in control of translational fidelity.

One of the primary rRNA binding proteins, it binds directly to 16S rRNA where it nucleates assembly of the body of the 30S subunit. Functionally, with S5 and S12 plays an important role in translational accuracy. This chain is Small ribosomal subunit protein uS4, found in Endomicrobium trichonymphae.